The primary structure comprises 194 residues: dTTP/UTP pyrophosphatase (194 aa).

The active-site Proton acceptor is D68.

Belongs to the Maf family. YhdE subfamily. A divalent metal cation serves as cofactor.

The protein resides in the cytoplasm. The enzyme catalyses dTTP + H2O = dTMP + diphosphate + H(+). The catalysed reaction is UTP + H2O = UMP + diphosphate + H(+). In terms of biological role, nucleoside triphosphate pyrophosphatase that hydrolyzes dTTP and UTP. May have a dual role in cell division arrest and in preventing the incorporation of modified nucleotides into cellular nucleic acids. In Clostridioides difficile (strain 630) (Peptoclostridium difficile), this protein is dTTP/UTP pyrophosphatase.